The chain runs to 563 residues: uncharacterized protein (563 aa).

Over 1 to 13 the chain is Cytoplasmic; sequence MASRSCICQVSAG. Residues 14-34 form a helical membrane-spanning segment; sequence IIFLIGAALLVAGLVIVLNVF. Residues 35–528 lie on the Lumenal side of the membrane; it reads PNIVNNQIND…LFTPVSTVNT (494 aa). Residues N43, N112, N133, N188, N265, N295, N315, and N502 are each glycosylated (N-linked (GlcNAc...) asparagine). Residues 529–549 form a helical membrane-spanning segment; sequence ICWIAVGLGAGLIALSIVMVI. Topologically, residues 550-563 are cytoplasmic; sequence VSFCCFRDEHHKTS.

Belongs to the CD36 family.

Its subcellular location is the membrane. This is an uncharacterized protein from Caenorhabditis elegans.